Consider the following 96-residue polypeptide: Small ribosomal subunit protein bS18c (96 aa).

It belongs to the bacterial ribosomal protein bS18 family. As to quaternary structure, part of the 30S ribosomal subunit.

Its subcellular location is the plastid. The protein resides in the chloroplast. This Pinus thunbergii (Japanese black pine) protein is Small ribosomal subunit protein bS18c (rps18).